Here is a 671-residue protein sequence, read N- to C-terminus: DNA ligase (671 aa).

NAD(+)-binding positions include 32 to 36, 81 to 82, and Glu113; these read DAEYD and SL. The active-site N6-AMP-lysine intermediate is the Lys115. NAD(+)-binding residues include Arg136, Glu173, Lys290, and Lys314. Residues Cys408, Cys411, Cys426, and Cys432 each coordinate Zn(2+). Positions 593–671 constitute a BRCT domain; that stretch reads EIDSPFAGKT…EAEMLRLLGS (79 aa).

Belongs to the NAD-dependent DNA ligase family. LigA subfamily. The cofactor is Mg(2+). Requires Mn(2+) as cofactor.

It catalyses the reaction NAD(+) + (deoxyribonucleotide)n-3'-hydroxyl + 5'-phospho-(deoxyribonucleotide)m = (deoxyribonucleotide)n+m + AMP + beta-nicotinamide D-nucleotide.. Functionally, DNA ligase that catalyzes the formation of phosphodiester linkages between 5'-phosphoryl and 3'-hydroxyl groups in double-stranded DNA using NAD as a coenzyme and as the energy source for the reaction. It is essential for DNA replication and repair of damaged DNA. This is DNA ligase from Escherichia coli (strain ATCC 8739 / DSM 1576 / NBRC 3972 / NCIMB 8545 / WDCM 00012 / Crooks).